Consider the following 117-residue polypeptide: Small ribosomal subunit protein bS16 (117 aa).

Residues 81 to 90 (LKKRPNRNNP) are compositionally biased toward basic residues. A disordered region spans residues 81–117 (LKKRPNRNNPHKGQPGKKAQERISAAKQVAEAESAPV).

Belongs to the bacterial ribosomal protein bS16 family.

The polypeptide is Small ribosomal subunit protein bS16 (Bartonella quintana (strain Toulouse) (Rochalimaea quintana)).